Consider the following 248-residue polypeptide: Small ribosomal subunit protein eS6 (248 aa).

Positions 213–248 (LLAQRKKESKAKREEAKRRRSASMRESKSSISSDKK) are disordered. The span at 223 to 248 (AKREEAKRRRSASMRESKSSISSDKK) shows a compositional bias: basic and acidic residues.

The protein belongs to the eukaryotic ribosomal protein eS6 family. Component of the small ribosomal subunit. Part of the small subunit (SSU) processome, composed of more than 70 proteins and the RNA chaperone small nucleolar RNA (snoRNA) U3. Post-translationally, ribosomal protein S6 is the major substrate of protein kinases in eukaryote ribosomes.

It localises to the cytoplasm. It is found in the nucleus. Its subcellular location is the nucleolus. Component of the 40S small ribosomal subunit. Plays an important role in controlling cell growth and proliferation through the selective translation of particular classes of mRNA. Part of the small subunit (SSU) processome, first precursor of the small eukaryotic ribosomal subunit. During the assembly of the SSU processome in the nucleolus, many ribosome biogenesis factors, an RNA chaperone and ribosomal proteins associate with the nascent pre-rRNA and work in concert to generate RNA folding, modifications, rearrangements and cleavage as well as targeted degradation of pre-ribosomal RNA by the RNA exosome. The protein is Small ribosomal subunit protein eS6 (RpS6) of Glossina morsitans morsitans (Savannah tsetse fly).